The primary structure comprises 432 residues: Chorismate synthase aro-2 (432 aa).

Catalysis depends on residues H17, H106, and D367. The interval 406 to 432 is disordered; the sequence is LKQTINSGKDTVGNGVSENVQESDLAQ. Residues 408–432 are compositionally biased toward polar residues; the sequence is QTINSGKDTVGNGVSENVQESDLAQ.

It belongs to the chorismate synthase family. As to quaternary structure, homotetramer.

It carries out the reaction 5-O-(1-carboxyvinyl)-3-phosphoshikimate = chorismate + phosphate. It catalyses the reaction FMNH2 + NADP(+) = FMN + NADPH + 2 H(+). It participates in metabolic intermediate biosynthesis; chorismate biosynthesis; chorismate from D-erythrose 4-phosphate and phosphoenolpyruvate: step 7/7. Functionally, bifunctional chorismate synthase and flavin reductase that catalyzes the conversion of 5-enolpyruvylshikimate 3-phosphate (EPSP) to form chorismate, which is the last common intermediate in the synthesis of the three aromatic amino acids phenylalanine, tyrosine and tryptophan. Acts also as a flavin reductase (FR) able to generate reduced flavin mononucleotide in the presence of NADPH. The protein is Chorismate synthase aro-2 of Neurospora crassa (strain ATCC 24698 / 74-OR23-1A / CBS 708.71 / DSM 1257 / FGSC 987).